A 685-amino-acid chain; its full sequence is Exocyst complex component 8 (685 aa).

In terms of domain architecture, PH spans 151-251 (YLVYNGDLTE…WLEILEQTKK (101 aa)). Residues 254–263 (ALNEKQKQEE) show a composition bias toward basic and acidic residues. Residues 254 to 273 (ALNEKQKQEETTPQLPVVPE) are disordered.

It belongs to the EXO84 family. As to quaternary structure, the exocyst complex is composed of exoc1, exoc2, exoc3, exoc4, exoc5, exoc6, exoc7 and exoc8.

Its subcellular location is the cytoplasm. It localises to the perinuclear region. It is found in the cell projection. The protein resides in the growth cone. Functionally, component of the exocyst complex involved in the docking of exocytic vesicles with fusion sites on the plasma membrane. The polypeptide is Exocyst complex component 8 (exoc8) (Xenopus laevis (African clawed frog)).